The primary structure comprises 362 residues: Spermidine/putrescine import ATP-binding protein PotA (362 aa).

In terms of domain architecture, ABC transporter spans 4 to 235; that stretch reads IKLDHITKQY…PVNDFVARFI (232 aa). An ATP-binding site is contributed by 37-44; sequence GPSGSGKT.

It belongs to the ABC transporter superfamily. Spermidine/putrescine importer (TC 3.A.1.11.1) family. As to quaternary structure, the complex is composed of two ATP-binding proteins (PotA), two transmembrane proteins (PotB and PotC) and a solute-binding protein (PotD).

The protein localises to the cell membrane. It carries out the reaction ATP + H2O + polyamine-[polyamine-binding protein]Side 1 = ADP + phosphate + polyamineSide 2 + [polyamine-binding protein]Side 1.. Its function is as follows. Part of the ABC transporter complex PotABCD involved in spermidine/putrescine import. Responsible for energy coupling to the transport system. This Lactobacillus delbrueckii subsp. bulgaricus (strain ATCC 11842 / DSM 20081 / BCRC 10696 / JCM 1002 / NBRC 13953 / NCIMB 11778 / NCTC 12712 / WDCM 00102 / Lb 14) protein is Spermidine/putrescine import ATP-binding protein PotA.